A 405-amino-acid polypeptide reads, in one-letter code: Envelope glycoprotein M (405 aa).

Residues 1 to 17 (MKSSKNDTFVYRTWVKT) are Intravirion-facing. The chain crosses the membrane as a helical span at residues 18 to 38 (LVVYFVMFVMSAVVPITAMFP). The Virion surface portion of the chain corresponds to 39–76 (NLGYPCYFNALVDYGALNLTNYNLAHHLTPTLYLEPPE). A helical membrane pass occupies residues 77-97 (MFVYITLVFIADCVAFIYYAC). The Intravirion segment spans residues 98-121 (GEVALIKARKKVSGLTDLSAWVSA). Residues 122–142 (VGSPTVLFLAILKLWSIQVFI) form a helical membrane-spanning segment. At 143 to 149 (QVLSYKH) the chain is on the virion surface side. A helical membrane pass occupies residues 150–170 (VFLSAFVYFLHFLASVLHACA). Residues 171–192 (CVTRFSPVWVVKAQDNSIPQDT) lie on the Intravirion side of the membrane. Residues 193 to 215 (FLWWVVFYLKPVVTNLYLGCLAL) form a helical membrane-spanning segment. Residues 216 to 245 (ETLVFSLSVFLALGNSFYFMVGDMVLGAVN) are Virion surface-facing. Residues 246 to 266 (LFLILPIFWYILTEVWLASFL) traverse the membrane as a helical segment. A topological domain (intravirion) is located at residue R267. Residues 268–288 (HNFGFYCGMFIASIILILPLV) traverse the membrane as a helical segment. The Virion surface segment spans residues 289-299 (RYEAVFVSAKL). The chain crosses the membrane as a helical span at residues 300-320 (HTTVAINVAIIPILCSVAMLI). Over 321–405 (RICRIFKSMR…TTDSEEEIFP (85 aa)) the chain is Intravirion. The tract at residues 346–405 (LESEPRPRPSRTPSPGRNRRRSSTSSSSSRSTRRQRPVSTQALVSSVLPMTTDSEEEIFP) is disordered. The segment covering 386–397 (QALVSSVLPMTT) has biased composition (polar residues).

This sequence belongs to the herpesviridae glycoprotein M family. In terms of assembly, interacts (via N-terminus) with gN (via N-terminus). The gM-gN heterodimer forms the gCII complex.

It is found in the virion membrane. The protein resides in the host Golgi apparatus. It localises to the host trans-Golgi network. Its subcellular location is the host endosome membrane. The protein localises to the host nucleus inner membrane. Its function is as follows. Envelope glycoprotein important for virion assembly and egress. Plays a role in the correct incorporation of gH-gL into virion membrane. Directs the glycoprotein N (gN) to the host trans-Golgi network. The protein is Envelope glycoprotein M of Epstein-Barr virus (strain B95-8) (HHV-4).